The chain runs to 101 residues: opdI (101 aa).

Residues 30–49 (GGMGGALKIVFLGMMTYFIA) form a helical membrane-spanning segment. The tract at residues 56-101 (SQHPPTDFNAPVQSVPQRAQRPSDTRLQGPVLLASNHPSGDSASPE) is disordered. 2 stretches are compositionally biased toward polar residues: residues 66–81 (PVQSVPQRAQRPSDTR) and 91–101 (NHPSGDSASPE).

It localises to the membrane. In terms of biological role, part of the gene cluster that mediates the biosynthesis of oxopyrrolidines, polyketide-amino acid hybrid compounds with feature structures of tetramic acid. Does not seem to play a role in oxopyrrolidines A and B biosynthesis. In Penicillium oxalicum (strain 114-2 / CGMCC 5302) (Penicillium decumbens), this protein is opdI.